The primary structure comprises 542 residues: Glucans biosynthesis protein D (542 aa).

The segment at residues 1 to 31 (MHRRNLLKASMAIAAYTGLSATGLLASRAWA) is a signal peptide (tat-type signal).

This sequence belongs to the OpgD/OpgG family. In terms of processing, predicted to be exported by the Tat system. The position of the signal peptide cleavage has not been experimentally proven.

The protein localises to the periplasm. The protein operates within glycan metabolism; osmoregulated periplasmic glucan (OPG) biosynthesis. Functionally, probably involved in the control of the structural glucose backbone of osmoregulated periplasmic glucans (OPGs). This Pseudomonas fluorescens (strain Pf0-1) protein is Glucans biosynthesis protein D.